A 153-amino-acid polypeptide reads, in one-letter code: Superoxide dismutase [Cu-Zn] (153 aa).

Cu cation-binding residues include H45, H47, and H62. An intrachain disulfide couples C56 to C145. The Zn(2+) site is built by H62, H70, H79, and D82. Residue H119 coordinates Cu cation.

Belongs to the Cu-Zn superoxide dismutase family. Homodimer. It depends on Cu cation as a cofactor. Zn(2+) is required as a cofactor.

Its subcellular location is the cytoplasm. The enzyme catalyses 2 superoxide + 2 H(+) = H2O2 + O2. Destroys radicals which are normally produced within the cells and which are toxic to biological systems. This chain is Superoxide dismutase [Cu-Zn], found in Drosophila yakuba (Fruit fly).